Consider the following 195-residue polypeptide: PABIR family member 1 (195 aa).

This sequence belongs to the FAM122 family.

The protein is PABIR family member 1 of Homo sapiens (Human).